The chain runs to 723 residues: Threonine--tRNA ligase, mitochondrial (723 aa).

Residue Ser57 is modified to Phosphoserine. Positions 64-126 constitute a TGS domain; that stretch reads RAIKISLPEG…ETDCHLRFLT (63 aa).

The protein belongs to the class-II aminoacyl-tRNA synthetase family. In terms of assembly, homodimer.

The protein localises to the mitochondrion matrix. It catalyses the reaction tRNA(Thr) + L-threonine + ATP = L-threonyl-tRNA(Thr) + AMP + diphosphate + H(+). Functionally, catalyzes the attachment of threonine to tRNA(Thr) in a two-step reaction: threonine is first activated by ATP to form Thr-AMP and then transferred to the acceptor end of tRNA(Thr). Also edits incorrectly charged tRNA(Thr) via its editing domain. This is Threonine--tRNA ligase, mitochondrial (Tars2) from Mus musculus (Mouse).